The sequence spans 547 residues: MAAKDVKFGNDARVKMLEGVNVLADAVKVTLGPKGRNVVLDKSFGAPTITKDGVSVAREIELEDKFQNMGAQMVKEVASKANDAAGDGTTTATVLAQAIVNEGLKAVAAGMNPMDLKRGIDKAVAAAVEQLKELSVECNDTKAIAQVGTISANSDASVGNIIAEAMERVGRDGVITVEEGQALQDELDVVEGMQFDRGYLSPYFINNQEAGSVELENPFILLVDKKISNIRELLPTLEAVAKASRPLLIIAEDVEGEALATLVVNNMRGIVKVAAVKAPGFGDRRKAMLQDIAILTGGTVISEEIGLELEKVTLEDLGQAKRVSITKENSTIIDGAGEEAMIQGRVAQIRQQIEDATSDYDKEKLQERVAKLAGGVAVIKVGAATEVEMKEKKDRVEDALHATRAAVEEGVVAGGGVALIRAASKIVDLEGDNEEQNVGIRVALRAMEAPIRQITKNAGDEDSVVANNVKAGEGSYGYNAATGEYGDMLEMGILDPTKVTRSALQFAASVAGLMITTEAMVTDLPQKESAGMPDMGGMGGMGGMGMM.

ATP is bound by residues 30 to 33 (TLGP), K51, 87 to 91 (DGTTT), G415, 479 to 481 (NAA), and D495.

It belongs to the chaperonin (HSP60) family. In terms of assembly, forms a cylinder of 14 subunits composed of two heptameric rings stacked back-to-back. Interacts with the co-chaperonin GroES.

The protein localises to the cytoplasm. It carries out the reaction ATP + H2O + a folded polypeptide = ADP + phosphate + an unfolded polypeptide.. Its function is as follows. Together with its co-chaperonin GroES, plays an essential role in assisting protein folding. The GroEL-GroES system forms a nano-cage that allows encapsulation of the non-native substrate proteins and provides a physical environment optimized to promote and accelerate protein folding. This Vibrio parahaemolyticus serotype O3:K6 (strain RIMD 2210633) protein is Chaperonin GroEL 1.